The primary structure comprises 387 residues: Eukaryotic translation initiation factor 3 subunit M (387 aa).

One can recognise a PCI domain in the interval 181 to 340 (LSSKVMIELL…RKVHISSTMH (160 aa)).

Belongs to the eIF-3 subunit M family. As to quaternary structure, component of the eukaryotic translation initiation factor 3 (eIF-3) complex. The eIF-3 complex interacts with pix.

It is found in the cytoplasm. The protein resides in the golgi apparatus. Its function is as follows. Component of the eukaryotic translation initiation factor 3 (eIF-3) complex, which is involved in protein synthesis of a specialized repertoire of mRNAs and, together with other initiation factors, stimulates binding of mRNA and methionyl-tRNAi to the 40S ribosome. The eIF-3 complex specifically targets and initiates translation of a subset of mRNAs involved in cell proliferation. The polypeptide is Eukaryotic translation initiation factor 3 subunit M (Drosophila pseudoobscura pseudoobscura (Fruit fly)).